The primary structure comprises 137 residues: Large ribosomal subunit protein uL16 (137 aa).

It belongs to the universal ribosomal protein uL16 family. Part of the 50S ribosomal subunit.

Binds 23S rRNA and is also seen to make contacts with the A and possibly P site tRNAs. The chain is Large ribosomal subunit protein uL16 from Mycoplasma capricolum subsp. capricolum (strain California kid / ATCC 27343 / NCTC 10154).